The chain runs to 207 residues: Imidazole glycerol phosphate synthase subunit HisH (207 aa).

The 207-residue stretch at methionine 1–asparagine 207 folds into the Glutamine amidotransferase type-1 domain. Residue cysteine 79 is the Nucleophile of the active site. Catalysis depends on residues histidine 185 and glutamate 187.

Heterodimer of HisH and HisF.

The protein localises to the cytoplasm. The enzyme catalyses 5-[(5-phospho-1-deoxy-D-ribulos-1-ylimino)methylamino]-1-(5-phospho-beta-D-ribosyl)imidazole-4-carboxamide + L-glutamine = D-erythro-1-(imidazol-4-yl)glycerol 3-phosphate + 5-amino-1-(5-phospho-beta-D-ribosyl)imidazole-4-carboxamide + L-glutamate + H(+). The catalysed reaction is L-glutamine + H2O = L-glutamate + NH4(+). Its pathway is amino-acid biosynthesis; L-histidine biosynthesis; L-histidine from 5-phospho-alpha-D-ribose 1-diphosphate: step 5/9. Its function is as follows. IGPS catalyzes the conversion of PRFAR and glutamine to IGP, AICAR and glutamate. The HisH subunit catalyzes the hydrolysis of glutamine to glutamate and ammonia as part of the synthesis of IGP and AICAR. The resulting ammonia molecule is channeled to the active site of HisF. The polypeptide is Imidazole glycerol phosphate synthase subunit HisH (Shouchella clausii (strain KSM-K16) (Alkalihalobacillus clausii)).